The chain runs to 192 residues: MRVVFLGPPGSGKGTQARMLTEEYRIPQLSTGDMLREVISRETEVGRKAKAIINAGALVSDSIVNQIVSNRINESDCINGFVLDGYPRTVGQAEVLQQILQSKNMQLDAVIELIVDENALIERMKKRVQETIAVGGQVRSDDNHVAFAKRLVEYREKTAPLSKFYSERGLLKVVDGMMAVTEVSRVIRGFFK.

10 to 15 lines the ATP pocket; the sequence is GSGKGT. The NMP stretch occupies residues 30-59; that stretch reads STGDMLREVISRETEVGRKAKAIINAGALV. AMP contacts are provided by residues Thr-31, Arg-36, 57-59, 85-88, and Gln-92; these read ALV and GYPR. Residues 126–142 form an LID region; sequence KRVQETIAVGGQVRSDD. An ATP-binding site is contributed by Arg-127. Positions 139 and 150 each coordinate AMP. ATP is bound at residue Met-178.

Belongs to the adenylate kinase family. In terms of assembly, monomer.

The protein resides in the cytoplasm. The enzyme catalyses AMP + ATP = 2 ADP. It functions in the pathway purine metabolism; AMP biosynthesis via salvage pathway; AMP from ADP: step 1/1. Its function is as follows. Catalyzes the reversible transfer of the terminal phosphate group between ATP and AMP. Plays an important role in cellular energy homeostasis and in adenine nucleotide metabolism. In Bartonella quintana (strain Toulouse) (Rochalimaea quintana), this protein is Adenylate kinase.